Here is a 92-residue protein sequence, read N- to C-terminus: PqqA binding protein (92 aa).

The protein belongs to the PqqD family. As to quaternary structure, monomer. Interacts with PqqE.

It functions in the pathway cofactor biosynthesis; pyrroloquinoline quinone biosynthesis. Its function is as follows. Functions as a PqqA binding protein and presents PqqA to PqqE, in the pyrroloquinoline quinone (PQQ) biosynthetic pathway. This chain is PqqA binding protein, found in Stutzerimonas stutzeri (strain A1501) (Pseudomonas stutzeri).